Consider the following 475-residue polypeptide: Ribulose bisphosphate carboxylase large chain (475 aa).

Residues 1-2 (MS) constitute a propeptide that is removed on maturation. An N-acetylproline modification is found at proline 3. Residue lysine 14 is modified to N6,N6,N6-trimethyllysine. Residues asparagine 123 and threonine 173 each contribute to the substrate site. Lysine 175 serves as the catalytic Proton acceptor. Lysine 177 serves as a coordination point for substrate. Residues lysine 201, aspartate 203, and glutamate 204 each coordinate Mg(2+). The residue at position 201 (lysine 201) is an N6-carboxylysine. Catalysis depends on histidine 294, which acts as the Proton acceptor. Substrate contacts are provided by arginine 295, histidine 327, and serine 379.

Belongs to the RuBisCO large chain family. Type I subfamily. Heterohexadecamer of 8 large chains and 8 small chains; disulfide-linked. The disulfide link is formed within the large subunit homodimers. Mg(2+) serves as cofactor. Post-translationally, the disulfide bond which can form in the large chain dimeric partners within the hexadecamer appears to be associated with oxidative stress and protein turnover.

It is found in the plastid. The protein resides in the chloroplast. The enzyme catalyses 2 (2R)-3-phosphoglycerate + 2 H(+) = D-ribulose 1,5-bisphosphate + CO2 + H2O. It carries out the reaction D-ribulose 1,5-bisphosphate + O2 = 2-phosphoglycolate + (2R)-3-phosphoglycerate + 2 H(+). In terms of biological role, ruBisCO catalyzes two reactions: the carboxylation of D-ribulose 1,5-bisphosphate, the primary event in carbon dioxide fixation, as well as the oxidative fragmentation of the pentose substrate in the photorespiration process. Both reactions occur simultaneously and in competition at the same active site. In Pelargonium hortorum (Common geranium), this protein is Ribulose bisphosphate carboxylase large chain.